The following is a 1039-amino-acid chain: Antigen 43 (1039 aa).

An N-terminal signal peptide occupies residues 1–52 (MKRHLNTCYRLVWNHMTGAFVVASELARARGKRGGVAVALSLAAVTSLPVLA). An Autotransporter domain is found at 737–1039 (VNGENNSVRL…NGQATLNVTF (303 aa)).

As to quaternary structure, interaction with TamA of the translocation and assembly module (TAM) initiates insertion in the outer membrane.

The protein localises to the periplasm. It localises to the secreted. Its subcellular location is the cell surface. The protein resides in the cell outer membrane. In terms of biological role, controls colony form variation and autoaggregation. May function as an adhesin. This is Antigen 43 (flu) from Escherichia coli (strain K12).